The following is a 33-amino-acid chain: Actin (33 aa).

It belongs to the actin family.

The protein resides in the cytoplasm. It localises to the cytoskeleton. It carries out the reaction ATP + H2O = ADP + phosphate + H(+). Functionally, actins are highly conserved proteins that are involved in various types of cell motility and are ubiquitously expressed in all eukaryotic cells. This chain is Actin, found in Dictyocaulus viviparus (Bovine lungworm).